The primary structure comprises 490 residues: Betaine aldehyde dehydrogenase (490 aa).

K(+) contacts are provided by S26, I27, and D93. 150–152 (GAW) serves as a coordination point for NAD(+). Residue K162 is the Charge relay system of the active site. Residue 176 to 179 (KPSE) coordinates NAD(+). V180 serves as a coordination point for K(+). 230–233 (GTVT) provides a ligand contact to NAD(+). K(+) is bound at residue L246. Catalysis depends on E252, which acts as the Proton acceptor. G254, C286, and E387 together coordinate NAD(+). C286 functions as the Nucleophile in the catalytic mechanism. C286 is modified (cysteine sulfenic acid (-SOH)). K(+)-binding residues include K457 and G460. The active-site Charge relay system is E464.

Belongs to the aldehyde dehydrogenase family. As to quaternary structure, dimer of dimers. The cofactor is K(+).

It catalyses the reaction betaine aldehyde + NAD(+) + H2O = glycine betaine + NADH + 2 H(+). It functions in the pathway amine and polyamine biosynthesis; betaine biosynthesis via choline pathway; betaine from betaine aldehyde: step 1/1. In terms of biological role, involved in the biosynthesis of the osmoprotectant glycine betaine. Catalyzes the irreversible oxidation of betaine aldehyde to the corresponding acid. This Ectopseudomonas mendocina (strain ymp) (Pseudomonas mendocina) protein is Betaine aldehyde dehydrogenase.